We begin with the raw amino-acid sequence, 125 residues long: Photosystem II extrinsic protein U (125 aa).

Positions 1-29 (MKRLLSWLTGLVVIAGLLIGLLVPPSVSA) are cleaved as a signal peptide.

Belongs to the PsbU family. PSII is composed of 1 copy each of membrane proteins PsbA, PsbB, PsbC, PsbD, PsbE, PsbF, PsbH, PsbI, PsbJ, PsbK, PsbL, PsbM, PsbT, PsbX, PsbY, PsbZ, Psb30/Ycf12, peripheral proteins PsbO, CyanoQ (PsbQ), PsbU, PsbV and a large number of cofactors. It forms dimeric complexes.

The protein resides in the cellular thylakoid membrane. Its function is as follows. One of the extrinsic, lumenal subunits of photosystem II (PSII). PSII is a light-driven water plastoquinone oxidoreductase, using light energy to abstract electrons from H(2)O, generating a proton gradient subsequently used for ATP formation. The extrinsic proteins stabilize the structure of photosystem II oxygen-evolving complex (OEC), the ion environment of oxygen evolution and protect the OEC against heat-induced inactivation. This is Photosystem II extrinsic protein U from Synechococcus sp. (strain CC9311).